A 373-amino-acid chain; its full sequence is Protein SENSITIVE TO PROTON RHIZOTOXICITY 2 (373 aa).

C2H2-type zinc fingers lie at residues 217–239 (HYCQ…MRAH) and 327–362 (KHCG…VPAH).

As to expression, expressed at low levels in roots (e.g. root tips and lateral roots), leaves (e.g. at the edge of mature leaves, possibly in hydathodes, and in vascular bundles), flowers (e.g. floral filaments), stems, siliques and cotyledons.

Its subcellular location is the nucleus. Probable transcription factor. Together with STOP1, plays a critical role in tolerance to major stress factors in acid soils such as proton H(+) and aluminum ion Al(3+). Required for the expression of genes in response to acidic stress (e.g. ALMT1 and MATE), and Al-activated citrate exudation. This chain is Protein SENSITIVE TO PROTON RHIZOTOXICITY 2, found in Arabidopsis thaliana (Mouse-ear cress).